The primary structure comprises 199 residues: Nucleoside triphosphate pyrophosphatase (199 aa).

Asp76 (proton acceptor) is an active-site residue.

This sequence belongs to the Maf family. A divalent metal cation is required as a cofactor.

The protein localises to the cytoplasm. The enzyme catalyses a ribonucleoside 5'-triphosphate + H2O = a ribonucleoside 5'-phosphate + diphosphate + H(+). The catalysed reaction is a 2'-deoxyribonucleoside 5'-triphosphate + H2O = a 2'-deoxyribonucleoside 5'-phosphate + diphosphate + H(+). Nucleoside triphosphate pyrophosphatase. May have a dual role in cell division arrest and in preventing the incorporation of modified nucleotides into cellular nucleic acids. The chain is Nucleoside triphosphate pyrophosphatase from Ruegeria sp. (strain TM1040) (Silicibacter sp.).